A 282-amino-acid polypeptide reads, in one-letter code: Bifunctional protein FolD (282 aa).

Residues 165–167 (GRS), S190, and T231 each bind NADP(+).

It belongs to the tetrahydrofolate dehydrogenase/cyclohydrolase family. As to quaternary structure, homodimer.

The catalysed reaction is (6R)-5,10-methylene-5,6,7,8-tetrahydrofolate + NADP(+) = (6R)-5,10-methenyltetrahydrofolate + NADPH. It catalyses the reaction (6R)-5,10-methenyltetrahydrofolate + H2O = (6R)-10-formyltetrahydrofolate + H(+). The protein operates within one-carbon metabolism; tetrahydrofolate interconversion. Functionally, catalyzes the oxidation of 5,10-methylenetetrahydrofolate to 5,10-methenyltetrahydrofolate and then the hydrolysis of 5,10-methenyltetrahydrofolate to 10-formyltetrahydrofolate. This is Bifunctional protein FolD from Clostridium botulinum (strain Eklund 17B / Type B).